Consider the following 229-residue polypeptide: Ribose-5-phosphate isomerase A (229 aa).

Substrate-binding positions include 28–31 (TGST), 85–88 (DGAD), and 98–101 (KGRG). The active-site Proton acceptor is E107. A substrate-binding site is contributed by K125.

It belongs to the ribose 5-phosphate isomerase family. In terms of assembly, homotetramer.

It catalyses the reaction aldehydo-D-ribose 5-phosphate = D-ribulose 5-phosphate. Its pathway is carbohydrate degradation; pentose phosphate pathway; D-ribose 5-phosphate from D-ribulose 5-phosphate (non-oxidative stage): step 1/1. Inhibited by D-4-phosphoerythronic acid. Its function is as follows. Involved in the first step of the non-oxidative branch of the pentose phosphate pathway. It catalyzes the reversible conversion of ribose-5-phosphate to ribulose 5-phosphate. This is Ribose-5-phosphate isomerase A from Pyrococcus horikoshii (strain ATCC 700860 / DSM 12428 / JCM 9974 / NBRC 100139 / OT-3).